We begin with the raw amino-acid sequence, 173 residues long: NAD(P)H-quinone oxidoreductase subunit J (173 aa).

Belongs to the complex I 30 kDa subunit family. NDH-1 can be composed of about 15 different subunits; different subcomplexes with different compositions have been identified which probably have different functions.

The protein resides in the cellular thylakoid membrane. The enzyme catalyses a plastoquinone + NADH + (n+1) H(+)(in) = a plastoquinol + NAD(+) + n H(+)(out). It catalyses the reaction a plastoquinone + NADPH + (n+1) H(+)(in) = a plastoquinol + NADP(+) + n H(+)(out). Its function is as follows. NDH-1 shuttles electrons from an unknown electron donor, via FMN and iron-sulfur (Fe-S) centers, to quinones in the respiratory and/or the photosynthetic chain. The immediate electron acceptor for the enzyme in this species is believed to be plastoquinone. Couples the redox reaction to proton translocation, and thus conserves the redox energy in a proton gradient. Cyanobacterial NDH-1 also plays a role in inorganic carbon-concentration. The chain is NAD(P)H-quinone oxidoreductase subunit J from Prochlorococcus marinus (strain NATL2A).